A 712-amino-acid chain; its full sequence is Probable GTP diphosphokinase RSH3, chloroplastic (712 aa).

The N-terminal 64 residues, 1–64 (MVVATTIALY…LLFSGASVKS (64 aa)), are a transit peptide targeting the chloroplast. Low complexity predominate over residues 65 to 74 (SSSSSSSHPS). The disordered stretch occupies residues 65–84 (SSSSSSSHPSVGEELASIRH). Residues 237-338 (YLQHCVETAM…IKLADRLHNM (102 aa)) form the HD domain.

It belongs to the RelA/SpoT family.

Its subcellular location is the plastid. It localises to the chloroplast. The enzyme catalyses GTP + ATP = guanosine 3'-diphosphate 5'-triphosphate + AMP. Probable ppGpp (guanosine 3'-diphosphate 5'-diphosphate) synthetase that may be involved in a rapid plant ppGpp-mediated response to pathogens and other stresses. The chain is Probable GTP diphosphokinase RSH3, chloroplastic (RSH3) from Arabidopsis thaliana (Mouse-ear cress).